The following is a 108-amino-acid chain: Parvalbumin beta 2 (108 aa).

The residue at position 1 (Ala-1) is an N-acetylalanine. EF-hand domains lie at 38 to 73 and 77 to 108; these read KSAADIKKVFGIIDQDKSDFVEEDELKLFLQNFSAG and LTDAETATFLKAGDSDGDGKIGVDEFAAMVKG. Residues Asp-51, Asp-53, Ser-55, Phe-57, Glu-59, Glu-62, Asp-90, Asp-92, Asp-94, Lys-96, and Glu-101 each contribute to the Ca(2+) site.

Belongs to the parvalbumin family.

Functionally, in muscle, parvalbumin is thought to be involved in relaxation after contraction. It binds two calcium ions. The polypeptide is Parvalbumin beta 2 (Merluccius bilinearis (Silver hake)).